A 135-amino-acid chain; its full sequence is MLSPKRTRFRKHHRGRMKGISYRGNHICFGRYALQALEPAWITSRQIEAGRRAMTRNARRGGKIWVRIFPDKPITVRPTETRMGSGKGSPEYWVAVVKPGRILYEMSGVPENIARKAIAIAASKMPIRTQFIISG.

The protein belongs to the universal ribosomal protein uL16 family. Part of the 50S ribosomal subunit.

The protein localises to the plastid. It localises to the chloroplast. In Morus indica (Mulberry), this protein is Large ribosomal subunit protein uL16c.